Here is a 541-residue protein sequence, read N- to C-terminus: Ankyrin repeat domain-containing protein 13C (541 aa).

The span at 1 to 20 (MTGEKIRSLRRDHKPSKEDG) shows a compositional bias: basic and acidic residues. Positions 1–53 (MTGEKIRSLRRDHKPSKEDGDVLEPCEEEATAALGGAFTGGRSGPGGSGKGGK) are disordered. The span at 21-30 (DVLEPCEEEA) shows a compositional bias: acidic residues. The span at 37–52 (AFTGGRSGPGGSGKGG) shows a compositional bias: gly residues. ANK repeat units lie at residues 111–142 (PSLY…QKDN), 143–172 (HGNT…PVKV), and 176–205 (QGWS…QQSR). A Phosphoserine modification is found at serine 411.

Its subcellular location is the endoplasmic reticulum membrane. Its function is as follows. Acts as a molecular chaperone for G protein-coupled receptors, regulating their biogenesis and exit from the ER. The polypeptide is Ankyrin repeat domain-containing protein 13C (Ankrd13c) (Mus musculus (Mouse)).